We begin with the raw amino-acid sequence, 345 residues long: Meiotically up-regulated gene 97 protein (345 aa).

A run of 2 helical transmembrane segments spans residues 292-312 and 319-329; these read MWVLSLLLFSAGGSVLIGLWM and FAHGMLLNLGI.

It is found in the membrane. Its function is as follows. Required for correct meiotic chromosome segregation. Appears to also have role in sporulation. The polypeptide is Meiotically up-regulated gene 97 protein (mug97) (Schizosaccharomyces pombe (strain 972 / ATCC 24843) (Fission yeast)).